Reading from the N-terminus, the 388-residue chain is MSSVEVVAQQQQLLAAEHPRRMGKGAAADPRRAALGELTNLNAVAATNGKVGPSKKPSKASCVQKPKPPQLVAPMIQTGAAASAPVSAKPCVKEEQLCQAFSEVLLAVQDVDEQDADQPQLCSQYVKDIYKYLHVLEEQQPVRANYMQGYEVTERMRALLVDWLVQVHSRFQLLQETLYLTVAILDPFLQVHPVSRRKLQLVGVTAMLVACKYEKMYAPEVGDFSYITDNAFTKSQIVEMEQVILRSLSFQLGRPLPLHFLRRASKVAGADVEKHTLAKYLMELTLLDYHMVHYRPSEVAAAALCLSQLLLDGLPWSLTQQQYSTYEEQHLKPIMQHIAKNVVLVNEGRTKFLAVKKKYSSSKLMKISLIPQLNSSTVKALAESLLNP.

The segment at 46 to 67 (ATNGKVGPSKKPSKASCVQKPK) is disordered.

This sequence belongs to the cyclin family. Cyclin AB subfamily. In terms of assembly, interacts with the CDK1 protein kinase to form a serine/threonine kinase holoenzyme complex also known as maturation promoting factor (MPF). The cyclin subunit imparts substrate specificity to the complex.

In terms of biological role, essential for the control of the cell cycle at the G2/M (mitosis) transition. The protein is G2/mitotic-specific cyclin-B2 (ccnb2) of Oryzias curvinotus (Hynann ricefish).